We begin with the raw amino-acid sequence, 89 residues long: UPF0335 protein RPC_3979 (89 aa).

It belongs to the UPF0335 family.

In Rhodopseudomonas palustris (strain BisB18), this protein is UPF0335 protein RPC_3979.